The sequence spans 160 residues: 6,7-dimethyl-8-ribityllumazine synthase (160 aa).

5-amino-6-(D-ribitylamino)uracil contacts are provided by residues Phe-22, 57-59, and 81-83; these read TYE and TII. 86-87 serves as a coordination point for (2S)-2-hydroxy-3-oxobutyl phosphate; that stretch reads QT. The active-site Proton donor is His-89. Residue Leu-114 coordinates 5-amino-6-(D-ribitylamino)uracil. Residue Arg-128 participates in (2S)-2-hydroxy-3-oxobutyl phosphate binding.

It belongs to the DMRL synthase family. Forms an icosahedral capsid composed of 60 subunits, arranged as a dodecamer of pentamers.

It catalyses the reaction (2S)-2-hydroxy-3-oxobutyl phosphate + 5-amino-6-(D-ribitylamino)uracil = 6,7-dimethyl-8-(1-D-ribityl)lumazine + phosphate + 2 H2O + H(+). Its pathway is cofactor biosynthesis; riboflavin biosynthesis; riboflavin from 2-hydroxy-3-oxobutyl phosphate and 5-amino-6-(D-ribitylamino)uracil: step 1/2. Catalyzes the formation of 6,7-dimethyl-8-ribityllumazine by condensation of 5-amino-6-(D-ribitylamino)uracil with 3,4-dihydroxy-2-butanone 4-phosphate. This is the penultimate step in the biosynthesis of riboflavin. The sequence is that of 6,7-dimethyl-8-ribityllumazine synthase from Buchnera aphidicola subsp. Acyrthosiphon pisum (strain Tuc7).